Here is a 252-residue protein sequence, read N- to C-terminus: Tumor necrosis factor ligand superfamily member 15 (252 aa).

Over 1–39 the chain is Cytoplasmic; that stretch reads MAEELGLGFGEGVPVEVLPEGCRHRPEARAGLAARSKAC. The chain crosses the membrane as a helical; Signal-anchor for type II membrane protein span at residues 40–60; the sequence is LALTCCLLSFPILAGLSTLLM. Residues 61–252 are Extracellular-facing; sequence AGQLRVPGKD…DKTFFGAFLL (192 aa). The THD domain maps to 96–252; it reads PRAHLTIKKQ…DKTFFGAFLL (157 aa). N137 carries an N-linked (GlcNAc...) asparagine glycan. A disulfide bridge connects residues C163 and C203. A glycan (N-linked (GlcNAc...) asparagine) is linked at N230.

The protein belongs to the tumor necrosis factor family. As to quaternary structure, homotrimer.

It localises to the membrane. Its function is as follows. Receptor for TNFRSF25 and TNFRSF6B. Mediates activation of NF-kappa-B. Inhibits vascular endothelial growth and angiogenesis (in vitro). Promotes activation of caspases and apoptosis. Promotes splenocyte alloactivation. The sequence is that of Tumor necrosis factor ligand superfamily member 15 (Tnfsf15) from Mus musculus (Mouse).